The chain runs to 238 residues: Purine nucleoside phosphorylase DeoD-type (238 aa).

Residue His-4 participates in a purine D-ribonucleoside binding. Phosphate contacts are provided by residues Gly-20, Arg-24, Arg-43, and Arg-87–Ser-90. A purine D-ribonucleoside contacts are provided by residues Glu-179 to Glu-181 and Ser-203 to Asp-204. Asp-204 functions as the Proton donor in the catalytic mechanism.

It belongs to the PNP/UDP phosphorylase family. As to quaternary structure, homohexamer; trimer of homodimers.

The enzyme catalyses a purine D-ribonucleoside + phosphate = a purine nucleobase + alpha-D-ribose 1-phosphate. The catalysed reaction is a purine 2'-deoxy-D-ribonucleoside + phosphate = a purine nucleobase + 2-deoxy-alpha-D-ribose 1-phosphate. In terms of biological role, catalyzes the reversible phosphorolytic breakdown of the N-glycosidic bond in the beta-(deoxy)ribonucleoside molecules, with the formation of the corresponding free purine bases and pentose-1-phosphate. This Haemophilus influenzae (strain PittGG) protein is Purine nucleoside phosphorylase DeoD-type.